Reading from the N-terminus, the 594-residue chain is Probable acyl-CoA dehydrogenase (594 aa).

Glu-405 acts as the Proton acceptor in catalysis.

This sequence belongs to the acyl-CoA dehydrogenase family. It depends on FAD as a cofactor.

It catalyses the reaction a 2,3-saturated acyl-CoA + A = a 2,3-dehydroacyl-CoA + AH2. It functions in the pathway lipid metabolism; fatty acid beta-oxidation. Functionally, involved in the degradation of long-chain fatty acids. This is Probable acyl-CoA dehydrogenase (fadE) from Bacillus subtilis (strain 168).